The primary structure comprises 196 residues: Cell division protein SepF (196 aa).

A disordered region spans residues Glu-16–Pro-81. Residues Arg-56 to Ala-69 are compositionally biased toward polar residues.

Belongs to the SepF family. As to quaternary structure, homodimer. Interacts with FtsZ.

The protein resides in the cytoplasm. Its function is as follows. Cell division protein that is part of the divisome complex and is recruited early to the Z-ring. Probably stimulates Z-ring formation, perhaps through the cross-linking of FtsZ protofilaments. Its function overlaps with FtsA. In Lactococcus lactis subsp. lactis (strain IL1403) (Streptococcus lactis), this protein is Cell division protein SepF.